The primary structure comprises 541 residues: NEDD8-activating enzyme E1 regulatory subunit (541 aa).

The protein belongs to the ubiquitin-activating E1 family. ULA1 subfamily. As to quaternary structure, heterodimer of uba-3 and ula-1. The complex binds NEDD8 and ubc-12.

The protein operates within protein modification; protein neddylation. In terms of biological role, regulatory subunit of the dimeric uba-3-ula-1 E1 enzyme. E1 activates NEDD8 by first adenylating its C-terminal glycine residue with ATP, thereafter linking this residue to the side chain of the catalytic cysteine, yielding a NEDD8-rfl-1 (uba-3) thioester and free AMP. E1 finally transfers NEDD8 to the catalytic cysteine of ubc-12. Required for rfl-1 (uba-3) nuclear localization during early embryonic development. This Caenorhabditis elegans protein is NEDD8-activating enzyme E1 regulatory subunit (ula-1).